Reading from the N-terminus, the 206-residue chain is Small ribosomal subunit protein uS4 (206 aa).

An S4 RNA-binding domain is found at 96-156 (QRLDNVVYRM…EKAKKQARIV (61 aa)).

The protein belongs to the universal ribosomal protein uS4 family. As to quaternary structure, part of the 30S ribosomal subunit. Contacts protein S5. The interaction surface between S4 and S5 is involved in control of translational fidelity.

Functionally, one of the primary rRNA binding proteins, it binds directly to 16S rRNA where it nucleates assembly of the body of the 30S subunit. In terms of biological role, with S5 and S12 plays an important role in translational accuracy. This Alteromonas mediterranea (strain DSM 17117 / CIP 110805 / LMG 28347 / Deep ecotype) protein is Small ribosomal subunit protein uS4.